Reading from the N-terminus, the 106-residue chain is Large ribosomal subunit protein uL24 (106 aa).

This sequence belongs to the universal ribosomal protein uL24 family. Part of the 50S ribosomal subunit.

In terms of biological role, one of two assembly initiator proteins, it binds directly to the 5'-end of the 23S rRNA, where it nucleates assembly of the 50S subunit. Functionally, one of the proteins that surrounds the polypeptide exit tunnel on the outside of the subunit. In Spiroplasma kunkelii, this protein is Large ribosomal subunit protein uL24.